The sequence spans 166 residues: Peptide deformylase (166 aa).

Fe cation is bound by residues Cys-88 and His-130. Residue Glu-131 is part of the active site. Position 134 (His-134) interacts with Fe cation.

This sequence belongs to the polypeptide deformylase family. It depends on Fe(2+) as a cofactor.

The catalysed reaction is N-terminal N-formyl-L-methionyl-[peptide] + H2O = N-terminal L-methionyl-[peptide] + formate. In terms of biological role, removes the formyl group from the N-terminal Met of newly synthesized proteins. Requires at least a dipeptide for an efficient rate of reaction. N-terminal L-methionine is a prerequisite for activity but the enzyme has broad specificity at other positions. The protein is Peptide deformylase of Caldicellulosiruptor bescii (strain ATCC BAA-1888 / DSM 6725 / KCTC 15123 / Z-1320) (Anaerocellum thermophilum).